A 245-amino-acid polypeptide reads, in one-letter code: tRNA (guanine-N(1)-)-methyltransferase (245 aa).

Residues Gly-113 and 133–138 (IGDYVL) contribute to the S-adenosyl-L-methionine site.

The protein belongs to the RNA methyltransferase TrmD family. Homodimer.

The protein resides in the cytoplasm. The catalysed reaction is guanosine(37) in tRNA + S-adenosyl-L-methionine = N(1)-methylguanosine(37) in tRNA + S-adenosyl-L-homocysteine + H(+). Functionally, specifically methylates guanosine-37 in various tRNAs. This Histophilus somni (strain 129Pt) (Haemophilus somnus) protein is tRNA (guanine-N(1)-)-methyltransferase.